The following is a 231-amino-acid chain: Aquaporin Z (231 aa).

A run of 2 helical transmembrane segments spans residues F11–F31 and I36–I56. The short motif at N65–A67 is the NPA 1 element. 3 helical membrane passes run L84–I104, M132–G152, and G161–I181. The short motif at N187 to A189 is the NPA 2 element. A helical transmembrane segment spans residues V203 to I223.

Belongs to the MIP/aquaporin (TC 1.A.8) family. Homotetramer.

It localises to the cell inner membrane. It catalyses the reaction H2O(in) = H2O(out). Functionally, channel that permits osmotically driven movement of water in both directions. It is involved in the osmoregulation and in the maintenance of cell turgor during volume expansion in rapidly growing cells. It mediates rapid entry or exit of water in response to abrupt changes in osmolarity. The protein is Aquaporin Z of Shewanella oneidensis (strain ATCC 700550 / JCM 31522 / CIP 106686 / LMG 19005 / NCIMB 14063 / MR-1).